A 347-amino-acid polypeptide reads, in one-letter code: NADH-ubiquinone oxidoreductase chain 2 (347 aa).

A run of 10 helical transmembrane segments spans residues 3–23, 26–46, 67–87, 96–116, 149–169, 178–198, 200–220, 239–259, 274–294, and 325–345; these read PLIF…TMIS, WLLI…IIMM, SMLL…WTIM, YMMT…FWVP, LNLN…GWGG, IMAY…MYNT, LMML…ALFI, ILTT…PLSG, NMLL…YFYM, and LSPT…MMLI.

The protein belongs to the complex I subunit 2 family. As to quaternary structure, core subunit of respiratory chain NADH dehydrogenase (Complex I) which is composed of 45 different subunits. Interacts with TMEM242.

It is found in the mitochondrion inner membrane. The enzyme catalyses a ubiquinone + NADH + 5 H(+)(in) = a ubiquinol + NAD(+) + 4 H(+)(out). Core subunit of the mitochondrial membrane respiratory chain NADH dehydrogenase (Complex I) which catalyzes electron transfer from NADH through the respiratory chain, using ubiquinone as an electron acceptor. Essential for the catalytic activity and assembly of complex I. This is NADH-ubiquinone oxidoreductase chain 2 from Dasypus novemcinctus (Nine-banded armadillo).